The chain runs to 407 residues: MDLTGLLLDEEGAFSLTGFQDFMVLPGHQKLSARIRRRLYYGWDLETDCSLEELSSPVADITVELLQKAAPSPIRRLQKKYVAHVSREACISPCAMMLALVYIERLRHRNPDYLQHVSSSDLFLISMMVASKYLYDEGEEEEVFNDEWGAAGGVAVATLNALERSFLSAMDWRLYTDPREIFEVLSWLESCVAEQQGRRRGWYTYTDLCVLLEQPTWQLALGSLCQRLVKLSCLLAVAYVSSVALAVASVAVIHQSLGLSSSPSPGPPELTLVSKSLVQPCVPAPVSQCLTNVSSCLEGSVDLPSLWGSLLAPLTPPLRPPPDPPAPPTPLHKCPLCQKFQRLPPNCRACHTNQTVSIGPSRPLYHARGLAPPWLWSPVAPPFLQPQQCSLFSVMELAHLKSVISPG.

Residues 233-253 (CLLAVAYVSSVALAVASVAVI) traverse the membrane as a helical segment.

The protein belongs to the CNPPD1 family.

The protein localises to the membrane. The sequence is that of Protein CNPPD1 (Cnppd1) from Mus musculus (Mouse).